Reading from the N-terminus, the 331-residue chain is Taste receptor type 2 member 38 (331 aa).

Residues 1-17 (MLTLTPVLTVSYEAKIS) lie on the Extracellular side of the membrane. The helical transmembrane segment at 18 to 38 (FLFLSVVEFAVGIMANAFIVL) threads the bilayer. Residues 39 to 54 (VNFWDMVKKQPLNNCD) are Cytoplasmic-facing. Residues 55-75 (IALLCLSITRLFLQGLLLLDA) form a helical membrane-spanning segment. The Extracellular segment spans residues 76–94 (IQLACFQQMKDPLSHNYQA). Residues 95 to 115 (ILTLWMSANQVSLWLAACLSL) traverse the membrane as a helical segment. The Cytoplasmic portion of the chain corresponds to 116–142 (LYCAKIVRFSHTFPLHLASWVSRRFLQ). The chain crosses the membrane as a helical span at residues 143 to 163 (MLLVALLFSGVCTALCLWDFF). The Extracellular portion of the chain corresponds to 164–198 (SRSHTVVTSMLHMNNTEFNLQIEKLNFFYSFVFCN). The N-linked (GlcNAc...) asparagine glycan is linked to N177. Residues 199–219 (VGSVPPSLVFLISSGVLVISL) traverse the membrane as a helical segment. Over 220–243 (GNHMRTMKSQTRGSRDPSLEAHVR) the chain is Cytoplasmic. The chain crosses the membrane as a helical span at residues 244–264 (AIIFLVSFLCFYVVSFCAALI). The Extracellular segment spans residues 265–276 (SIPLLVLWHNKG). The helical transmembrane segment at 277–297 (GVMVCIGMMAACPSGHAAILI) threads the bilayer. Topologically, residues 298–331 (SGNAKLKKVIVTILFWFQSRQKVRRVHKVLPRIL) are cytoplasmic.

This sequence belongs to the G-protein coupled receptor T2R family. In terms of tissue distribution, expressed in tongue, stomach and duodenum.

Its subcellular location is the membrane. Functionally, putative taste receptor which may play a role in the perception of bitterness. This Rattus norvegicus (Rat) protein is Taste receptor type 2 member 38 (Tas2r38).